We begin with the raw amino-acid sequence, 249 residues long: tRNA (guanine-N(1)-)-methyltransferase (249 aa).

Residues Gly-112 and Leu-132–Leu-137 each bind S-adenosyl-L-methionine.

It belongs to the RNA methyltransferase TrmD family. In terms of assembly, homodimer.

It localises to the cytoplasm. It catalyses the reaction guanosine(37) in tRNA + S-adenosyl-L-methionine = N(1)-methylguanosine(37) in tRNA + S-adenosyl-L-homocysteine + H(+). Functionally, specifically methylates guanosine-37 in various tRNAs. This is tRNA (guanine-N(1)-)-methyltransferase from Geobacter sp. (strain M21).